The following is a 507-amino-acid chain: MEELQGYLEIDRSRQQHFLYPLLFQEYIYALAHDHGLNGSIFYEPMENLGYDNKSSSLIVKRLITRMHQQNHLIISVNDSNENGFVGRNKSFYSQMVSEGFAVIMEIPFSLRLVSSLEEKEIAKYHNLRSIHSIFPFFEDKLSHLNHVSDILIPHPIHLEILVQTLHCWIQDAPSLHLLRFFLHEYRNSNSLITPKKSISLLKKENQRFFLFLYNSHVYECESVLVFLRKQSSHLRSTSSGTFLERTHFYGKIEHLVVVLRNDFQKTLWLFKDPFMHYVRYQGKYILASKGTHLLMKKWKSHLVNFWQCHFYLWSRPDRIHINQLYNHSFYFLGYLSSVRLNTSVVGIQMLENSFLIDTSINKFETLVPIISLIGSVVKAKFCNVSGHPISKSVRADSSDSDIINRFGQIYRNLSHYHSGSSKKQTLYRIKYILRLSCARTLARKHKSTVRAFLKRLGSEFLEEFLTEEEQVLSLIFQRNSFPSYRSHRERIWYLDIIRINDLANHS.

The protein belongs to the intron maturase 2 family. MatK subfamily.

Its subcellular location is the plastid. It is found in the chloroplast. Its function is as follows. Usually encoded in the trnK tRNA gene intron. Probably assists in splicing its own and other chloroplast group II introns. The chain is Maturase K from Liriodendron chinense (Chinese tulip tree).